A 420-amino-acid chain; its full sequence is Serine hydroxymethyltransferase (420 aa).

Residues Leu121 and 125–127 (GHL) contribute to the (6S)-5,6,7,8-tetrahydrofolate site. Lys229 is modified (N6-(pyridoxal phosphate)lysine).

The protein belongs to the SHMT family. In terms of assembly, homodimer. Requires pyridoxal 5'-phosphate as cofactor.

The protein localises to the cytoplasm. The catalysed reaction is (6R)-5,10-methylene-5,6,7,8-tetrahydrofolate + glycine + H2O = (6S)-5,6,7,8-tetrahydrofolate + L-serine. Its pathway is one-carbon metabolism; tetrahydrofolate interconversion. It participates in amino-acid biosynthesis; glycine biosynthesis; glycine from L-serine: step 1/1. In terms of biological role, catalyzes the reversible interconversion of serine and glycine with tetrahydrofolate (THF) serving as the one-carbon carrier. This reaction serves as the major source of one-carbon groups required for the biosynthesis of purines, thymidylate, methionine, and other important biomolecules. Also exhibits THF-independent aldolase activity toward beta-hydroxyamino acids, producing glycine and aldehydes, via a retro-aldol mechanism. The sequence is that of Serine hydroxymethyltransferase from Glaesserella parasuis serovar 5 (strain SH0165) (Haemophilus parasuis).